Consider the following 78-residue polypeptide: Defensin-like protein (78 aa).

An N-terminal signal peptide occupies residues 1 to 31 (MGRSIRLFATFFLIAMLFLSTEMGPMTSAEA). Disulfide bonds link C34–C78, C45–C65, C51–C72, and C55–C74.

The protein belongs to the DEFL family. Predominantly expressed in the pistil during all stages of flower development.

The protein resides in the secreted. Its function is as follows. May be involved in the defense of the pistil against pathogen infection. The chain is Defensin-like protein from Petunia integrifolia (Violet-flowered petunia).